The sequence spans 302 residues: RNA polymerase II holoenzyme cyclin-like subunit (302 aa).

The region spanning glutamine 53–serine 142 is the Cyclin N-terminal domain.

This sequence belongs to the cyclin family. Cyclin C subfamily. In terms of assembly, component of the srb8-11 complex, a regulatory module of the Mediator complex.

The protein localises to the nucleus. In terms of biological role, component of the srb8-11 complex. The srb8-11 complex is a regulatory module of the Mediator complex which is itself involved in regulation of basal and activated RNA polymerase II-dependent transcription. The srb8-11 complex may be involved in the transcriptional repression of a subset of genes regulated by Mediator. It may inhibit the association of the Mediator complex with RNA polymerase II to form the holoenzyme complex. The srb8-11 complex phosphorylates the C-terminal domain (CTD) of the largest subunit of RNA polymerase II. This is RNA polymerase II holoenzyme cyclin-like subunit (ssn8) from Aspergillus fumigatus (strain ATCC MYA-4609 / CBS 101355 / FGSC A1100 / Af293) (Neosartorya fumigata).